The sequence spans 150 residues: Large ribosomal subunit protein bL9 (150 aa).

Belongs to the bacterial ribosomal protein bL9 family.

Its function is as follows. Binds to the 23S rRNA. The chain is Large ribosomal subunit protein bL9 from Variovorax paradoxus (strain S110).